The sequence spans 342 residues: Ferredoxin--NADP reductase (342 aa).

Residues Cys17, Asp36, Gln44, Tyr49, Val89, Phe124, Asp289, and Thr330 each coordinate FAD.

Belongs to the ferredoxin--NADP reductase type 2 family. As to quaternary structure, homodimer. Requires FAD as cofactor.

It catalyses the reaction 2 reduced [2Fe-2S]-[ferredoxin] + NADP(+) + H(+) = 2 oxidized [2Fe-2S]-[ferredoxin] + NADPH. In Bradyrhizobium sp. (strain BTAi1 / ATCC BAA-1182), this protein is Ferredoxin--NADP reductase.